The following is a 533-amino-acid chain: Putative sel1-like repeat-containing protein L21 (533 aa).

5 Sel1-like repeats span residues 105–140, 141–172, 173–206, 207–242, and 243–278; these read VLSQ…NQGL, SFAQ…QSGY, YLSN…NQGC, NISQ…KQGN, and YFSQ…NCGH.

The polypeptide is Putative sel1-like repeat-containing protein L21 (Acanthamoeba polyphaga mimivirus (APMV)).